The following is a 292-amino-acid chain: Phosphatidylserine decarboxylase proenzyme (292 aa).

Active-site charge relay system; for autoendoproteolytic cleavage activity residues include Asp-89, His-146, and Ser-252. Residue Ser-252 is the Schiff-base intermediate with substrate; via pyruvic acid; for decarboxylase activity of the active site. Residue Ser-252 is modified to Pyruvic acid (Ser); by autocatalysis.

Belongs to the phosphatidylserine decarboxylase family. PSD-B subfamily. Prokaryotic type I sub-subfamily. As to quaternary structure, heterodimer of a large membrane-associated beta subunit and a small pyruvoyl-containing alpha subunit. The cofactor is pyruvate. In terms of processing, is synthesized initially as an inactive proenzyme. Formation of the active enzyme involves a self-maturation process in which the active site pyruvoyl group is generated from an internal serine residue via an autocatalytic post-translational modification. Two non-identical subunits are generated from the proenzyme in this reaction, and the pyruvate is formed at the N-terminus of the alpha chain, which is derived from the carboxyl end of the proenzyme. The autoendoproteolytic cleavage occurs by a canonical serine protease mechanism, in which the side chain hydroxyl group of the serine supplies its oxygen atom to form the C-terminus of the beta chain, while the remainder of the serine residue undergoes an oxidative deamination to produce ammonia and the pyruvoyl prosthetic group on the alpha chain. During this reaction, the Ser that is part of the protease active site of the proenzyme becomes the pyruvoyl prosthetic group, which constitutes an essential element of the active site of the mature decarboxylase.

Its subcellular location is the cell membrane. It catalyses the reaction a 1,2-diacyl-sn-glycero-3-phospho-L-serine + H(+) = a 1,2-diacyl-sn-glycero-3-phosphoethanolamine + CO2. Its pathway is phospholipid metabolism; phosphatidylethanolamine biosynthesis; phosphatidylethanolamine from CDP-diacylglycerol: step 2/2. Functionally, catalyzes the formation of phosphatidylethanolamine (PtdEtn) from phosphatidylserine (PtdSer). The polypeptide is Phosphatidylserine decarboxylase proenzyme (Shewanella sp. (strain MR-4)).